The following is a 280-amino-acid chain: Ribosomal RNA small subunit methyltransferase A (280 aa).

Residues Asn-18, Leu-20, Gly-45, Glu-66, Asp-89, and Asn-110 each coordinate S-adenosyl-L-methionine.

Belongs to the class I-like SAM-binding methyltransferase superfamily. rRNA adenine N(6)-methyltransferase family. RsmA subfamily.

It is found in the cytoplasm. It catalyses the reaction adenosine(1518)/adenosine(1519) in 16S rRNA + 4 S-adenosyl-L-methionine = N(6)-dimethyladenosine(1518)/N(6)-dimethyladenosine(1519) in 16S rRNA + 4 S-adenosyl-L-homocysteine + 4 H(+). In terms of biological role, specifically dimethylates two adjacent adenosines (A1518 and A1519) in the loop of a conserved hairpin near the 3'-end of 16S rRNA in the 30S particle. May play a critical role in biogenesis of 30S subunits. In Cupriavidus necator (strain ATCC 17699 / DSM 428 / KCTC 22496 / NCIMB 10442 / H16 / Stanier 337) (Ralstonia eutropha), this protein is Ribosomal RNA small subunit methyltransferase A.